The sequence spans 465 residues: Mothers against decapentaplegic homolog 5 (465 aa).

N-acetylthreonine is present on threonine 2. The 125-residue stretch at 13-137 (PAVKRLLGWK…YKRVESPVLP (125 aa)) folds into the MH1 domain. Zn(2+)-binding residues include cysteine 65, cysteine 110, cysteine 122, and histidine 127. The segment at 163-251 (NEPHMPQNAT…DTSSNMIPQT (89 aa)) is disordered. The segment covering 169 to 182 (QNATFPDSFHQPNN) has biased composition (polar residues). The span at 186-197 (PLSPNSPYPPSP) shows a compositional bias: pro residues. Residues 198–214 (ASSTYPNSPASSGPGSP) are compositionally biased toward low complexity. Positions 237–251 (NSQPMDTSSNMIPQT) are enriched in polar residues. The MH2 domain maps to 271 to 465 (WCSIVYYELN…SPLNPISSVS (195 aa)). Phosphoserine occurs at positions 463 and 465.

Belongs to the dwarfin/SMAD family. As to quaternary structure, homodimer. Forms trimers with the co-SMAD SMAD4. Interacts with PEBP2-alpha subunit and SMURF1. Interacts with SUV39H1 and SUV39H2. Interacts (via MH2 domain) with LEMD3. Interacts with WWP1. Interacts with TMEM119. Interacts with ZNF8. Interacts with RANBP3L. Interacts with HK1. Interacts with HGS; this interaction attenuates BMP signaling. Phosphorylated on serine by BMP (bone morphogenetic proteins) type 1 receptor kinase. In terms of processing, ubiquitin-mediated proteolysis by SMAD-specific E3 ubiquitin ligase SMURF1. As to expression, predominantly expressed in mesenchyme and somites during embryogenesis, and present in many tissues of the adult.

It localises to the cytoplasm. The protein localises to the nucleus. It is found in the mitochondrion. In terms of biological role, transcriptional regulator that plays a role in various cellular processes including embryonic development, cell differentiation, angiogenesis and tissue homeostasis. Upon BMP ligand binding to their receptors at the cell surface, is phosphorylated by activated type I BMP receptors (BMPRIs) and associates with SMAD4 to form a heteromeric complex which translocates into the nucleus acting as transcription factor. In turn, the hetero-trimeric complex recognizes cis-regulatory elements containing Smad Binding Elements (SBEs) to modulate the outcome of the signaling network. Non-phosphorylated SMAD5 has a cytoplasmic role in energy metabolism regulation by promoting mitochondrial respiration and glycolysis in response to cytoplasmic pH changes. Mechanistically, interacts with hexokinase 1/HK1 and thereby accelerates glycolysis. This is Mothers against decapentaplegic homolog 5 (Smad5) from Mus musculus (Mouse).